Reading from the N-terminus, the 159-residue chain is MKIKLVTVGKLKEKYLKDGIAEYMKRLNRFCKVEMIELANEKTPDKASDLENQQILEKEGNKILAKINEREFVIALAIEGNQFPSEKFSQLMMDTTVHGFSDITFVIGGSLGLYPAVKKRANLLMSFGKLTLPHQLMRLVLIEQIYRAFMIQQGSPYHK.

S-adenosyl-L-methionine-binding positions include leucine 76, glycine 108, and 127–132; that span reads FGKLTL.

Belongs to the RNA methyltransferase RlmH family. As to quaternary structure, homodimer.

Its subcellular location is the cytoplasm. It carries out the reaction pseudouridine(1915) in 23S rRNA + S-adenosyl-L-methionine = N(3)-methylpseudouridine(1915) in 23S rRNA + S-adenosyl-L-homocysteine + H(+). Its function is as follows. Specifically methylates the pseudouridine at position 1915 (m3Psi1915) in 23S rRNA. The protein is Ribosomal RNA large subunit methyltransferase H of Streptococcus sanguinis (strain SK36).